Consider the following 324-residue polypeptide: Meiotic recombination protein DLH1 (324 aa).

Gly-112–Thr-119 contacts ATP. Arg-214 is a dsDNA binding site. Arg-214, Tyr-217, Arg-220, Arg-226, and Arg-296 together coordinate ssDNA. DsDNA-binding residues include Arg-220 and Arg-226.

The protein belongs to the RecA family. DMC1 subfamily. As to quaternary structure, double stacked ring-shaped homooctamer.

It is found in the nucleus. Functionally, required for meiotic recombination, synaptonemal complex formation and cell cycle progression. The sequence is that of Meiotic recombination protein DLH1 (DLH1) from Candida albicans (Yeast).